The chain runs to 407 residues: Succinate--CoA ligase [ADP-forming] subunit beta, hydrogenosomal (407 aa).

The N-terminal 9 residues, 1-9, are a transit peptide targeting the hydrogenosome; that stretch reads MLSSSFARN. The 244-residue stretch at 18–261 folds into the ATP-grasp domain; the sequence is KEICAKYNVA…LKQVNPFEIR (244 aa). ATP is bound by residues K55, 62–64, and E124; that span reads GRG. Mg(2+) is bound by residues N216 and D230. Substrate is bound by residues N281 and 338–340; that span reads GIV.

Belongs to the succinate/malate CoA ligase beta subunit family. As to quaternary structure, heterodimer of an alpha and a beta subunit. Mg(2+) serves as cofactor.

The protein localises to the hydrogenosome. It catalyses the reaction succinate + ATP + CoA = succinyl-CoA + ADP + phosphate. It functions in the pathway carbohydrate metabolism; tricarboxylic acid cycle; succinate from succinyl-CoA (ligase route): step 1/1. Its function is as follows. Succinyl-CoA synthetase functions in the citric acid cycle (TCA), coupling the hydrolysis of succinyl-CoA to the synthesis of ATP and thus represents the only step of substrate-level phosphorylation in the TCA. The beta subunit provides nucleotide specificity of the enzyme and binds the substrate succinate, while the binding sites for coenzyme A and phosphate are found in the alpha subunit. This is Succinate--CoA ligase [ADP-forming] subunit beta, hydrogenosomal from Trichomonas vaginalis.